The chain runs to 740 residues: NAD(P)H-quinone oxidoreductase subunit 5, chloroplastic (740 aa).

17 helical membrane passes run 9–29 (WIIPFIPLPVTVLVGLGLLVV), 40–60 (WAFISVLLLSIALLFSINISI), 89–109 (IDSLTSIMLILITTVGIMVLI), 125–145 (FAYLNFFNASMLGLVTSSNLI), 147–167 (IYIFWELVGMCSYLLIGFWFT), 185–205 (GDFGLLLGILGLYWITGSFEF), 219–239 (NTINLFFAALCASLLFLGAIA), 258–278 (TPISALIHAATMVAAGIFLVA), 290–310 (IMYFISLIGIITVLLGATLAL), 327–347 (LGYIMLAMGIGSYRAALFHLI), 354–374 (ALLFLGSGSIIHSMEPIVGYS), 396–416 (TTFLLGTLSLCGIPPLACFWS), 425–445 (WLYSPIFAIIAYSTAGLTAFY), 521–538 (MFSFSIFFGNEIVFPYPH), 545–565 (LLSVCVLGLFTLFVGFIGIPL), 599–619 (FVINAIFSVSIALFGIFIASF), and 720–740 (YLFVYLSYVSVFLVVIYYFVL).

Belongs to the complex I subunit 5 family. In terms of assembly, NDH is composed of at least 16 different subunits, 5 of which are encoded in the nucleus.

Its subcellular location is the plastid. It localises to the chloroplast thylakoid membrane. It catalyses the reaction a plastoquinone + NADH + (n+1) H(+)(in) = a plastoquinol + NAD(+) + n H(+)(out). The catalysed reaction is a plastoquinone + NADPH + (n+1) H(+)(in) = a plastoquinol + NADP(+) + n H(+)(out). Functionally, NDH shuttles electrons from NAD(P)H:plastoquinone, via FMN and iron-sulfur (Fe-S) centers, to quinones in the photosynthetic chain and possibly in a chloroplast respiratory chain. The immediate electron acceptor for the enzyme in this species is believed to be plastoquinone. Couples the redox reaction to proton translocation, and thus conserves the redox energy in a proton gradient. The protein is NAD(P)H-quinone oxidoreductase subunit 5, chloroplastic (ndhF) of Piper cenocladum (Ant piper).